Consider the following 692-residue polypeptide: Elongation factor G (692 aa).

In terms of domain architecture, tr-type G spans 8-283 (KNTRNIGIMA…AVLDYLPSPV (276 aa)). Residues 17–24 (AHIDAGKT), 81–85 (DTPGH), and 135–138 (NKMD) contribute to the GTP site.

It belongs to the TRAFAC class translation factor GTPase superfamily. Classic translation factor GTPase family. EF-G/EF-2 subfamily.

It localises to the cytoplasm. Functionally, catalyzes the GTP-dependent ribosomal translocation step during translation elongation. During this step, the ribosome changes from the pre-translocational (PRE) to the post-translocational (POST) state as the newly formed A-site-bound peptidyl-tRNA and P-site-bound deacylated tRNA move to the P and E sites, respectively. Catalyzes the coordinated movement of the two tRNA molecules, the mRNA and conformational changes in the ribosome. In Exiguobacterium sibiricum (strain DSM 17290 / CCUG 55495 / CIP 109462 / JCM 13490 / 255-15), this protein is Elongation factor G.